The following is a 130-amino-acid chain: Small ribosomal subunit protein uS9 (130 aa).

Belongs to the universal ribosomal protein uS9 family.

The protein is Small ribosomal subunit protein uS9 of Paraburkholderia phytofirmans (strain DSM 17436 / LMG 22146 / PsJN) (Burkholderia phytofirmans).